The primary structure comprises 503 residues: D-xylose-proton symporter-like 1 (503 aa).

Positions 1 to 23 (MGFDPENQSISSVGQVVGDSSSG) are disordered. The segment covering 8–23 (QSISSVGQVVGDSSSG) has biased composition (low complexity). 12 helical membrane passes run 51–73 (FLFPALGALLFGYEIGATSCAIM), 95–115 (IITSGSLYGALIGSIVAFSVA), 129–149 (FLYLVGAIVTVVAPVFSILII), 152–172 (VTYGMGIGLTMHAAPMYIAET), 190–210 (VLGMVGGYGIGSLWITVISGW), 213–233 (MYATILPFPVIMGTGMCWLPA), 305–325 (ALTIAGGLVLFQQITGQPSVL), 346–366 (ISILLGLLKLVMTGVSVIVID), 374–394 (LLCGVSGMVISLFLLGSYYMF), 405–425 (ALLLYVGCYQLSFGPIGWLMI), 437–457 (GISLAVLVNFGANALVTFAFS), and 467–487 (ILFCAFGVICVVSLFFIYYIV).

This sequence belongs to the major facilitator superfamily. Sugar transporter (TC 2.A.1.1) family.

The protein localises to the membrane. The chain is D-xylose-proton symporter-like 1 from Arabidopsis thaliana (Mouse-ear cress).